The following is a 563-amino-acid chain: MSDFVDRVTVHVKGGDGGNGSAGIRREKYKPLAGPNGGNGGDGGSVIFMADSNANSLLDYRFMPHREAESGTMGLGDTKDGSKGADLILPVPVGTVVFEAKGPQGKPKHPGEQLADLRHAGDKFVVAAGGNGGLGNAALANRTRRAPGFALLGEPGEERDVILELKSIADVALVGFPSAGKSSLIAAMSSAKPKIADYPFTTLVPNLGVVVAGDMRYTIADVPGLIPGASQGKGLGLEFLRHIERTEIIAHVIDCATLEPGRDPMSDYQALEHELAEYAGKLELPLGAIPIPERPRIIILNKVDVPEAKELAEFVKPEFEKLGLKVHIISTASHEGLKELNWALADLVTNMRAEVAKREQAEEEARVVIKPLEEPRNRRRRNDEGGNALDFTVERKENGNGEVWYEVLGTKPERWVMQTNFDNDEAVGYLADRLAKLGVEDELRHKGAKPGDEVRIGRGDRAVEFDWDPTIAAGAEMLDGTQLGARGVDLRLQESDGRAQRRSNTERRRQYHEMMDARQAVREAMMAERKAGHWADPSVDDDRHDETSLFGRGETADDEDVEQ.

The Obg domain maps to 2–168 (SDFVDRVTVH…RDVILELKSI (167 aa)). An OBG-type G domain is found at 169 to 349 (ADVALVGFPS…LNWALADLVT (181 aa)). Residues 175-182 (GFPSAGKS), 200-204 (FTTLV), 221-224 (DVPG), 301-304 (NKVD), and 330-332 (STA) each bind GTP. Residues S182 and T202 each coordinate Mg(2+). The 87-residue stretch at 383–469 (DEGGNALDFT…DRAVEFDWDP (87 aa)) folds into the OCT domain. The disordered stretch occupies residues 525–563 (MMAERKAGHWADPSVDDDRHDETSLFGRGETADDEDVEQ).

Belongs to the TRAFAC class OBG-HflX-like GTPase superfamily. OBG GTPase family. As to quaternary structure, monomer. Mg(2+) serves as cofactor.

Its subcellular location is the cytoplasm. Functionally, an essential GTPase which binds GTP, GDP and possibly (p)ppGpp with moderate affinity, with high nucleotide exchange rates and a fairly low GTP hydrolysis rate. Plays a role in control of the cell cycle, stress response, ribosome biogenesis and in those bacteria that undergo differentiation, in morphogenesis control. The chain is GTPase Obg from Bifidobacterium adolescentis (strain ATCC 15703 / DSM 20083 / NCTC 11814 / E194a).